Consider the following 1264-residue polypeptide: TBC1 domain family member 9 (1264 aa).

GRAM domains follow at residues V146 to A213 and E293 to D361. The segment at K410–V456 is disordered. The span at S425–S441 shows a compositional bias: low complexity. The Rab-GAP TBC domain maps to G515 to G702. Residues H886–G921 form the EF-hand domain. Positions S1119 to P1138 are enriched in basic and acidic residues. Positions S1119 to S1162 are disordered.

Functionally, may act as a GTPase-activating protein for Rab family protein(s). This Mus musculus (Mouse) protein is TBC1 domain family member 9 (Tbc1d9).